Here is a 274-residue protein sequence, read N- to C-terminus: NAD kinase (274 aa).

Residue D50 is the Proton acceptor of the active site. NAD(+)-binding positions include 50–51 (DG), 126–127 (NE), R152, D154, 165–170 (TAYNKS), and A189.

The protein belongs to the NAD kinase family. A divalent metal cation is required as a cofactor.

The protein localises to the cytoplasm. It catalyses the reaction NAD(+) + ATP = ADP + NADP(+) + H(+). Its function is as follows. Involved in the regulation of the intracellular balance of NAD and NADP, and is a key enzyme in the biosynthesis of NADP. Catalyzes specifically the phosphorylation on 2'-hydroxyl of the adenosine moiety of NAD to yield NADP. This chain is NAD kinase, found in Streptococcus gordonii (strain Challis / ATCC 35105 / BCRC 15272 / CH1 / DL1 / V288).